The sequence spans 114 residues: Nucleoid-associated protein PCC7424_2224 (114 aa).

This sequence belongs to the YbaB/EbfC family. Homodimer.

Its subcellular location is the cytoplasm. The protein resides in the nucleoid. Its function is as follows. Binds to DNA and alters its conformation. May be involved in regulation of gene expression, nucleoid organization and DNA protection. This Gloeothece citriformis (strain PCC 7424) (Cyanothece sp. (strain PCC 7424)) protein is Nucleoid-associated protein PCC7424_2224.